We begin with the raw amino-acid sequence, 45 residues long: Large ribosomal subunit protein bL34 (45 aa).

The protein belongs to the bacterial ribosomal protein bL34 family.

This Salinispora tropica (strain ATCC BAA-916 / DSM 44818 / JCM 13857 / NBRC 105044 / CNB-440) protein is Large ribosomal subunit protein bL34.